Reading from the N-terminus, the 643-residue chain is NAD-dependent malic enzyme, mitochondrial (643 aa).

The transit peptide at 1 to 38 directs the protein to the mitochondrion; sequence PRVRSFIAHQSGITSVIRRSPDIAHRMVRSLSVSSQRN. 3 residues coordinate fumarate: Gln116, Arg119, and Arg143. The active-site Proton donor is Tyr164. Position 219 (Arg219) interacts with (S)-malate. Residue Arg219 participates in NAD(+) binding. The Proton acceptor role is filled by Lys237. Glu309 and Asp310 together coordinate a divalent metal cation. 5 residues coordinate NAD(+): Asn313, Asp333, Ala366, Ala369, and Asn472. A divalent metal cation is bound at residue Asp333. Residues Asn472 and Asn516 each coordinate (S)-malate.

The protein belongs to the malic enzymes family. Homotetramer. It depends on Mg(2+) as a cofactor. Requires Mn(2+) as cofactor.

It localises to the mitochondrion matrix. It catalyses the reaction (S)-malate + NAD(+) = pyruvate + CO2 + NADH. It carries out the reaction oxaloacetate + H(+) = pyruvate + CO2. Subject to allosteric activation by fumarate. Its function is as follows. NAD-dependent mitochondrial malic enzyme that catalyzes the oxidative decarboxylation of malate to pyruvate. This is NAD-dependent malic enzyme, mitochondrial from Ascaris suum (Pig roundworm).